A 386-amino-acid polypeptide reads, in one-letter code: Mannitol-1-phosphate 5-dehydrogenase (386 aa).

4–15 (AVHFGAGNIGRG) lines the NAD(+) pocket.

This sequence belongs to the mannitol dehydrogenase family.

The catalysed reaction is D-mannitol 1-phosphate + NAD(+) = beta-D-fructose 6-phosphate + NADH + H(+). This Oceanobacillus iheyensis (strain DSM 14371 / CIP 107618 / JCM 11309 / KCTC 3954 / HTE831) protein is Mannitol-1-phosphate 5-dehydrogenase.